The chain runs to 434 residues: Glutamate-1-semialdehyde 2,1-aminomutase (434 aa).

Lysine 270 carries the post-translational modification N6-(pyridoxal phosphate)lysine.

Belongs to the class-III pyridoxal-phosphate-dependent aminotransferase family. HemL subfamily. Homodimer. It depends on pyridoxal 5'-phosphate as a cofactor.

The protein localises to the cytoplasm. It carries out the reaction (S)-4-amino-5-oxopentanoate = 5-aminolevulinate. It functions in the pathway porphyrin-containing compound metabolism; protoporphyrin-IX biosynthesis; 5-aminolevulinate from L-glutamyl-tRNA(Glu): step 2/2. This is Glutamate-1-semialdehyde 2,1-aminomutase from Pelotomaculum thermopropionicum (strain DSM 13744 / JCM 10971 / SI).